Consider the following 394-residue polypeptide: NADH dehydrogenase [ubiquinone] iron-sulfur protein 2 (394 aa).

This sequence belongs to the complex I 49 kDa subunit family. Complex I is composed of at least 49 different subunits. This is a component of the iron-sulfur (IP) fragment of the enzyme.

It localises to the mitochondrion. It catalyses the reaction a ubiquinone + NADH + 5 H(+)(in) = a ubiquinol + NAD(+) + 4 H(+)(out). In terms of biological role, core subunit of the mitochondrial membrane respiratory chain NADH dehydrogenase (Complex I) that is believed to belong to the minimal assembly required for catalysis. Complex I functions in the transfer of electrons from NADH to the respiratory chain. The immediate electron acceptor for the enzyme is believed to be ubiquinone. Component of the iron-sulfur (IP) fragment of the enzyme. The polypeptide is NADH dehydrogenase [ubiquinone] iron-sulfur protein 2 (NAD7) (Arabidopsis thaliana (Mouse-ear cress)).